Here is a 293-residue protein sequence, read N- to C-terminus: Ribosomal RNA small subunit methyltransferase A (293 aa).

Positions 36, 38, 63, 84, 111, and 132 each coordinate S-adenosyl-L-methionine.

Belongs to the class I-like SAM-binding methyltransferase superfamily. rRNA adenine N(6)-methyltransferase family. RsmA subfamily.

It localises to the cytoplasm. The catalysed reaction is adenosine(1518)/adenosine(1519) in 16S rRNA + 4 S-adenosyl-L-methionine = N(6)-dimethyladenosine(1518)/N(6)-dimethyladenosine(1519) in 16S rRNA + 4 S-adenosyl-L-homocysteine + 4 H(+). Its function is as follows. Specifically dimethylates two adjacent adenosines (A1518 and A1519) in the loop of a conserved hairpin near the 3'-end of 16S rRNA in the 30S particle. May play a critical role in biogenesis of 30S subunits. This is Ribosomal RNA small subunit methyltransferase A from Treponema denticola (strain ATCC 35405 / DSM 14222 / CIP 103919 / JCM 8153 / KCTC 15104).